Reading from the N-terminus, the 406-residue chain is 5-cytosine rRNA methyltransferase NSUN4 (406 aa).

Residues G207, G208, K209, D226, R231, D259, G260, and D277 each coordinate S-adenosyl-L-methionine. C332 serves as the catalytic Nucleophile.

The protein belongs to the class I-like SAM-binding methyltransferase superfamily. RsmB/NOP family.

It is found in the mitochondrion. The enzyme catalyses a cytidine in rRNA + S-adenosyl-L-methionine = a 5-methylcytidine in rRNA + S-adenosyl-L-homocysteine + H(+). The catalysed reaction is a cytidine in mRNA + S-adenosyl-L-methionine = a 5-methylcytidine in mRNA + S-adenosyl-L-homocysteine + H(+). Its function is as follows. Mitochondrial RNA cytosine C(5)-methyltransferase that methylates cytosine to 5-methylcytosine (m5C) in various RNAs, such as rRNAs, mRNAs and some long non-coding RNAs (lncRNAs). Involved in mitochondrial ribosome small subunit (SSU) maturation by catalyzing methylation of mitochondrial 12S rRNA. This is 5-cytosine rRNA methyltransferase NSUN4 (nsun4) from Xenopus laevis (African clawed frog).